The primary structure comprises 435 residues: Tektin-4 (435 aa).

A compositionally biased stretch (basic and acidic residues) spans 60–69; the sequence is DQSERQRHES. Residues 60–96 are disordered; it reads DQSERQRHESQQLATETQALAQRTQQDSTRTVGERLQ. Positions 70–85 are enriched in low complexity; it reads QQLATETQALAQRTQQ. Coiled coils occupy residues 102–180, 310–336, and 363–411; these read KSEL…LLKR, LHKTLREITDQEHNVAALKQAIKDKEA, and FRLL…TNSL.

The protein belongs to the tektin family. Microtubule inner protein component of sperm flagellar doublet microtubules. Ubiquitinated, leading to its degradation. Deubiquitinated by USP16, promoting its stability. In terms of tissue distribution, strongly expressed in spermatozoa. Also detected at low levels in pancreas. Expressed in airway epithelial cells.

The protein localises to the cytoplasm. It is found in the cytoskeleton. Its subcellular location is the cilium axoneme. The protein resides in the flagellum axoneme. Its function is as follows. Microtubule inner protein (MIP) part of the dynein-decorated doublet microtubules (DMTs) in cilia and flagellar axoneme. Forms filamentous polymers in the walls of ciliary and flagellar microtubules. Contributes to normal sperm motility. The chain is Tektin-4 from Homo sapiens (Human).